The primary structure comprises 407 residues: Probable tRNA sulfurtransferase (407 aa).

Positions 61 to 165 (NEITYRLSKI…LDAIYMYEEV (105 aa)) constitute a THUMP domain. ATP contacts are provided by residues 183 to 184 (ML), 208 to 209 (HF), R265, G287, and Q296.

This sequence belongs to the ThiI family.

It localises to the cytoplasm. It carries out the reaction [ThiI sulfur-carrier protein]-S-sulfanyl-L-cysteine + a uridine in tRNA + 2 reduced [2Fe-2S]-[ferredoxin] + ATP + H(+) = [ThiI sulfur-carrier protein]-L-cysteine + a 4-thiouridine in tRNA + 2 oxidized [2Fe-2S]-[ferredoxin] + AMP + diphosphate. It catalyses the reaction [ThiS sulfur-carrier protein]-C-terminal Gly-Gly-AMP + S-sulfanyl-L-cysteinyl-[cysteine desulfurase] + AH2 = [ThiS sulfur-carrier protein]-C-terminal-Gly-aminoethanethioate + L-cysteinyl-[cysteine desulfurase] + A + AMP + 2 H(+). It participates in cofactor biosynthesis; thiamine diphosphate biosynthesis. Catalyzes the ATP-dependent transfer of a sulfur to tRNA to produce 4-thiouridine in position 8 of tRNAs, which functions as a near-UV photosensor. Also catalyzes the transfer of sulfur to the sulfur carrier protein ThiS, forming ThiS-thiocarboxylate. This is a step in the synthesis of thiazole, in the thiamine biosynthesis pathway. The sulfur is donated as persulfide by IscS. The chain is Probable tRNA sulfurtransferase from Staphylococcus aureus (strain NCTC 8325 / PS 47).